Consider the following 685-residue polypeptide: Amino acid transporter heavy chain SLC3A1 (685 aa).

The segment covering M1–I11 has biased composition (basic and acidic residues). Residues M1–E56 are disordered. The Cytoplasmic portion of the chain corresponds to M1–E87. The residue at position 10 (S10) is a Phosphoserine. A helical; Signal-anchor for type II membrane protein membrane pass occupies residues I88–I108. The Extracellular portion of the chain corresponds to A109–C685. N214 lines the Ca(2+) pocket. 2 N-linked (GlcNAc...) asparagine glycosylation sites follow: N214 and N261. C242 and C273 are joined by a disulfide. Residues D284, F318, L319, and E321 each contribute to the Ca(2+) site. Residues N332, N495, N513, and N575 are each glycosylated (N-linked (GlcNAc...) asparagine). 2 disulfide bridges follow: C571-C666 and C673-C685.

As to quaternary structure, disulfide-linked heterodimer composed of the catalytic light subunit SLC7A9 and the heavy subunit SLC3A1. The heterodimer is the minimal functional unit. Assembles in non-covalently linked heterotetramers (dimers of heterodimers) and higher order oligomers; the oligomerization is mediated by SLC3A1 likely to prevent degradation in the endoplasmic reticulum and facilitate heteromer trafficking to the plasma membrane. Disulfide-linked heterodimer composed of the catalytic light subunit SLC7A13 and the heavy subunit SLC3A1. In terms of tissue distribution, expressed in the brush border membrane in the kidney (at protein level). Predominantly expressed in the kidney, small intestine and pancreas. Weakly expressed in liver.

Its subcellular location is the cell membrane. It is found in the apical cell membrane. Acts as a chaperone that facilitates biogenesis and trafficking of functional transporter heteromers to the plasma membrane. Associates with SLC7A9 to form a functional transporter complex that mediates the electrogenic exchange between cationic amino acids and neutral amino acids, with a stoichiometry of 1:1. SLC7A9-SLC3A1 transporter has system b(0,+)-like activity with high affinity for extracellular cationic amino acids and L-cystine and lower affinity for intracellular neutral amino acids. Substrate exchange is driven by high concentration of intracellular neutral amino acids and the intracellular reduction of L-cystine to L-cysteine. SLC7A9-SLC3A1 acts as a major transporter for reabsorption of L-cystine and dibasic amino acids across the brush border membrane in early proximal tubules. Associates with SLC7A13 to form a functional complex that transports anionic and neutral amino acids via exchange or facilitated diffusion. SLC7A13-SLC3A1 may act as a major transporter for L-cystine in late proximal tubules, ensuring its reabsorption from the luminal fluid in exchange for cytosolic L-glutamate or L-aspartate. The protein is Amino acid transporter heavy chain SLC3A1 of Homo sapiens (Human).